The chain runs to 1336 residues: Adhesion G protein-coupled receptor A2 (1336 aa).

The first 33 residues, 1 to 33, serve as a signal peptide directing secretion; it reads MGAGGRRMPVPPARLLLLPLLPCLLLLAPGTRG. Residues 34–769 lie on the Extracellular side of the membrane; it reads APGCPVPIRG…AGGSGAGLHP (736 aa). N-linked (GlcNAc...) asparagine glycosylation is found at asparagine 84 and asparagine 101. LRR repeat units follow at residues 85–106, 109–130, 133–154, and 157–178; these read GTITLLLSNNKITGLRNGSFLG, LLEKLDLRSNVISTVQPGAFLG, ELKRLDLSNNRIGCLTSETFQG, and RLLRLNISGNIYSSLQPGVFDE. An N-linked (GlcNAc...) asparagine glycan is attached at asparagine 162. The LRRCT domain maps to 190–241; that stretch reads EFLTCDCRLRWLLPWARNHSLQLSERTLCAYPSALHAHALSSLQESQLRCEG. Positions 247–344 constitute an Ig-like domain; that stretch reads THYLIPSLRQ…GNTSKKVEIV (98 aa). Cysteine 268 and cysteine 328 are oxidised to a cystine. N-linked (GlcNAc...) asparagine glycosylation occurs at asparagine 275. The short motif at 362-364 is the RGD element; the sequence is RGD. Positions 594 to 757 constitute a GAIN-B domain; that stretch reads FRCTTGRPNI…AVLMELNAFP (164 aa). N-linked (GlcNAc...) asparagine glycosylation is found at asparagine 602, asparagine 691, and asparagine 735. The segment at 711 to 757 is GPS; it reads AAWWNQDGPGGWSSEGCRLRYSQPNVSSLYCQHLGNVAVLMELNAFP. A disulfide bridge connects residues cysteine 727 and cysteine 741. The chain crosses the membrane as a helical span at residues 770–790; that stretch reads VVYPCTALLLLCLFSTIITYI. Topologically, residues 791-805 are cytoplasmic; that stretch reads LNHSSIHVSRKGWHM. Residues 806–826 traverse the membrane as a helical segment; that stretch reads LLNLCFHMAMTSAVFVGGVTL. Topologically, residues 827-830 are extracellular; it reads TNYQ. Residues 831–851 traverse the membrane as a helical segment; the sequence is MVCQAVGITLHYSSLSSLLWM. Over 852-884 the chain is Cytoplasmic; it reads GVKARVLHKELSWRAPPLEEGEAAPPGPRPMLR. The chain crosses the membrane as a helical span at residues 885 to 905; it reads FYLIAGGIPLIICGITAAVNI. Topologically, residues 906 to 922 are extracellular; the sequence is HNYRDHSPYCWLVWRPS. Residues 923 to 943 traverse the membrane as a helical segment; it reads LGAFYIPVALILPITWIYFLC. The Cytoplasmic portion of the chain corresponds to 944-1016; that stretch reads AGLHLRSHVA…DGVYSPGVQL (73 aa). A helical membrane pass occupies residues 1017–1037; that stretch reads GALMTTHFLYLAMWACGALAV. Residues 1038–1044 are Extracellular-facing; it reads SQRWLPR. A helical transmembrane segment spans residues 1045-1065; it reads VVCSCLYGVAASALGLFVFTH. Residues 1066–1336 are Cytoplasmic-facing; that stretch reads HCARRRDVRA…TGLWKSETTV (271 aa). The segment covering 1084–1095 has biased composition (low complexity); sequence ASPSASHVPARA. The segment at 1084–1310 is disordered; that stretch reads ASPSASHVPA…NGAPKGGKYE (227 aa). Residue serine 1104 is modified to Phosphoserine. Residues 1110-1124 are compositionally biased toward low complexity; that stretch reads GPASLKSSPSGSSGR. Polar residues predominate over residues 1133–1143; sequence TNLQVAQSQVC. Basic residues predominate over residues 1166-1186; sequence PRHHNNLHHGRRVHKSRAKGH. Polar residues predominate over residues 1213 to 1234; that stretch reads SSESGSLHNSPSDSYPGSSRNS. The PDZ-binding signature appears at 1333–1336; sequence ETTV.

The protein belongs to the G-protein coupled receptor 2 family. Adhesion G-protein coupled receptor (ADGR) subfamily. In terms of assembly, interacts with RECK; the interaction is direct. Interacts (via PDZ-binding motif) with DLG1 (via PDZ domains). The cleaved extracellular subunit interacts with the integrin heterodimer ITGAV:ITGB3. In terms of processing, glycosylated. Post-translationally, proteolytically cleaved into two subunits, an extracellular subunit and a seven-transmembrane subunit. Cleaved by thrombin (F2) and MMP1. Also cleaved by MMP9, with lower efficiency. Presence of the protein disulfide-isomerase P4HB at the cell surface is additionally required for shedding of the extracellular subunit, suggesting that the subunits are linked by disulfide bonds. Shedding is enhanced by the growth factor FGF2 and may promote cell survival during angiogenesis. As to expression, abundantly expressed in the vasculature of the developing embryo. Expression in normal adult tissues is specifically vascular with endothelial expression in CNS, including brain and retina and more widespread pericyte expression in the brain and organs, including the kidney, pancreas and corpus luteum.

It is found in the cell membrane. The protein localises to the cell projection. Its subcellular location is the filopodium. Its function is as follows. Endothelial receptor which functions together with RECK to enable brain endothelial cells to selectively respond to Wnt7 signals (WNT7A or WNT7B). Plays a key role in Wnt7-specific responses, such as endothelial cell sprouting and migration in the forebrain and neural tube, and establishment of the blood-brain barrier. Acts as a Wnt7-specific coactivator of canonical Wnt signaling: required to deliver RECK-bound Wnt7 to frizzled by assembling a higher-order RECK-ADGRA2-Fzd-LRP5-LRP6 complex. ADGRA2-tethering function does not rely on its G-protein coupled receptor (GPCR) structure but instead on its combined capacity to interact with RECK extracellularly and recruit the Dishevelled scaffolding protein intracellularly. Binds to the glycosaminoglycans heparin, heparin sulfate, chondroitin sulfate and dermatan sulfate. The sequence is that of Adhesion G protein-coupled receptor A2 from Mus musculus (Mouse).